Here is a 364-residue protein sequence, read N- to C-terminus: GDSL esterase/lipase At1g29660 (364 aa).

The first 26 residues, 1-26 (MESYLRKWCLVSVWVLLLGLGFKVKA), serve as a signal peptide directing secretion. Serine 39 serves as the catalytic Nucleophile. Catalysis depends on charge relay system residues aspartate 328 and histidine 331.

Belongs to the 'GDSL' lipolytic enzyme family. In terms of tissue distribution, found in phloem exudates.

The protein localises to the secreted. The protein resides in the extracellular space. Its subcellular location is the apoplast. Its function is as follows. Involved in EDS1-dependent systemic acquired resistance, maybe in phloem-mediated long-distance signaling. The polypeptide is GDSL esterase/lipase At1g29660 (Arabidopsis thaliana (Mouse-ear cress)).